The chain runs to 400 residues: MLARRKPVLPALTINPTIAEGPSPTSEGASEAHLVDLQKKLEELDLDEQQRKRLEAFLTQKAKVGELKDDDFERISELGAGNGGVVTKARHRPSGLIMARKLIHLEIKPAVRNQIIRELQVLHECNSPYIVGFYGAFYSDGEISICMEHMDGGSLDQVLKEAKRIPEDILGKVSIAVLRGLAYLREKHQIMHRDVKPSNILVNSRGEIKLCDFGVSGQLIDSMANSFVGTRSYMSPERLQGTHYSVQSDIWSMGLSLVELAIGRYPIPPPDAKELEASFGRPVVDGADGEPHSVSPRPRPPGRPISGHGMDSRPAMAIFELLDYIVNEPPPKLPSGVFSSDFQEFVNKCLIKNPAERADLKLLTNHAFIKRSEGEDVDFAGWLCRTLRLKQPSTPTRTAV.

N-acetylmethionine is present on Met-1. Position 23 is a phosphoserine (Ser-23). Residues 72–369 (FERISELGAG…LKLLTNHAFI (298 aa)) form the Protein kinase domain. ATP is bound by residues 78-86 (LGAGNGGVV) and Lys-101. Residue Asp-194 is the Proton acceptor of the active site. A phosphoserine; by RAF mark is found at Ser-222 and Ser-226. Residues 282-310 (PVVDGADGEPHSVSPRPRPPGRPISGHGM) form a disordered region. Ser-293, Ser-295, and Ser-306 each carry phosphoserine. Phosphothreonine occurs at positions 394 and 396.

Belongs to the protein kinase superfamily. STE Ser/Thr protein kinase family. MAP kinase kinase subfamily. In terms of assembly, interacts with MORG1. Interacts with SGK1. Interacts with KSR1. Interacts with KSR1 and BRAF; the interaction with KSR1 mediates KSR1-BRAF dimerization. Interacts with GLS. It depends on Mg(2+) as a cofactor. MAPKK is itself dependent on Ser/Thr phosphorylation for activity catalyzed by MAP kinase kinase kinases (RAF or MEKK1). Phosphorylated by MAP2K1/MEK1. As to expression, expressed abundantly in the adult brain and muscle.

The protein resides in the cytoplasm. The protein localises to the membrane. The enzyme catalyses L-seryl-[protein] + ATP = O-phospho-L-seryl-[protein] + ADP + H(+). It catalyses the reaction L-threonyl-[protein] + ATP = O-phospho-L-threonyl-[protein] + ADP + H(+). The catalysed reaction is L-tyrosyl-[protein] + ATP = O-phospho-L-tyrosyl-[protein] + ADP + H(+). Its function is as follows. Catalyzes the concomitant phosphorylation of a threonine and a tyrosine residue in a Thr-Glu-Tyr sequence located in MAP kinases. Activates the ERK1 and ERK2 MAP kinases. Activates BRAF in a KSR1 or KSR2-dependent manner; by binding to KSR1 or KSR2 releases the inhibitory intramolecular interaction between KSR1 or KSR2 protein kinase and N-terminal domains which promotes KSR1 or KSR2-BRAF dimerization and BRAF activation. The protein is Dual specificity mitogen-activated protein kinase kinase 2 (Map2k2) of Rattus norvegicus (Rat).